The chain runs to 92 residues: Progonadoliberin-1 (92 aa).

The first 23 residues, 1–23 (MGLIPKLLAGLVLLTLCVENGSG), serve as a signal peptide directing secretion. Glutamine 24 carries the post-translational modification Pyrrolidone carboxylic acid. A Glycine amide modification is found at glycine 33.

Belongs to the GnRH family. Post-translationally, the precursor is cleaved by ACE, which removes the Gly-Lys-Arg peptide at the C-terminus, leading to mature hormone. The mature form of Gonadoliberin-1 is also cleaved and degraded by ACE.

Its subcellular location is the secreted. Stimulates the secretion of gonadotropins; it stimulates the secretion of both luteinizing and follicle-stimulating hormones. In Cavia porcellus (Guinea pig), this protein is Progonadoliberin-1 (GNRH1).